The chain runs to 480 residues: Membrane-bound lytic murein transglycosylase F (480 aa).

An N-terminal signal peptide occupies residues 1-15 (MNRILLTLLTLTLLA). The interval 16-259 (GCQRVAVEET…HLDEKYFAHV (244 aa)) is non-LT domain. The tract at residues 260–480 (KRFDYVDTRA…EKAITGAQPE (221 aa)) is LT domain. Residue Glu304 is part of the active site.

It in the N-terminal section; belongs to the bacterial solute-binding protein 3 family. In the C-terminal section; belongs to the transglycosylase Slt family.

The protein resides in the cell outer membrane. The catalysed reaction is Exolytic cleavage of the (1-&gt;4)-beta-glycosidic linkage between N-acetylmuramic acid (MurNAc) and N-acetylglucosamine (GlcNAc) residues in peptidoglycan, from either the reducing or the non-reducing ends of the peptidoglycan chains, with concomitant formation of a 1,6-anhydrobond in the MurNAc residue.. Functionally, murein-degrading enzyme that degrades murein glycan strands and insoluble, high-molecular weight murein sacculi, with the concomitant formation of a 1,6-anhydromuramoyl product. Lytic transglycosylases (LTs) play an integral role in the metabolism of the peptidoglycan (PG) sacculus. Their lytic action creates space within the PG sacculus to allow for its expansion as well as for the insertion of various structures such as secretion systems and flagella. The protein is Membrane-bound lytic murein transglycosylase F of Shewanella woodyi (strain ATCC 51908 / MS32).